The primary structure comprises 606 residues: Zinc finger protein 652 (606 aa).

The residue at position 57 (S57) is a Phosphoserine. Residues H71–R97 show a composition bias toward basic and acidic residues. Disordered stretches follow at residues H71–K113 and V130–Q235. A compositionally biased stretch (acidic residues) spans E98 to E109. S100 bears the Phosphoserine mark. T103 is modified (phosphothreonine). Residues V137–T149 show a composition bias toward polar residues. The segment covering E152 to G170 has biased composition (acidic residues). Residues E171–E183 show a composition bias toward basic and acidic residues. Residues K184 to T209 are compositionally biased toward low complexity. 2 positions are modified to phosphoserine: S197 and S204. Residues L245 to H268 form a C2H2-type 1 zinc finger. The C2H2-type 2; degenerate zinc-finger motif lies at Q272–D294. C2H2-type zinc fingers lie at residues I299 to H322, F329 to H351, F357 to H379, F385 to H407, F413 to H435, and F441 to H463. The C2H2-type 9; degenerate zinc finger occupies Y469 to F492. Residues V498–H606 form a mediates interaction with CBFA2T3 region.

Belongs to the krueppel C2H2-type zinc-finger protein family. As to quaternary structure, interacts with CBFA2T3. In terms of tissue distribution, widely expressed with higher expression in breast, prostate, vulva and pancreas.

It localises to the nucleus. Functions as a transcriptional repressor. The sequence is that of Zinc finger protein 652 (ZNF652) from Homo sapiens (Human).